The chain runs to 470 residues: Cyclic AMP receptor-like protein D (470 aa).

The Extracellular portion of the chain corresponds to 1 to 16; it reads MSSCSSLSMDDRVKIG. The helical transmembrane segment at 17-37 threads the bilayer; it reads YGSIAGASLSIIGSIGTIILI. The Cytoplasmic segment spans residues 38–123; it reads KIRNKKQEKK…NNNQKTKVSH (86 aa). The chain crosses the membrane as a helical span at residues 124 to 144; it reads FIINLSIANLLASIFMITIKL. Residues 145–176 lie on the Extracellular side of the membrane; sequence MMIHFNDKFIKVLPSTANHSFNALISVCTIGN. Residue N162 is glycosylated (N-linked (GlcNAc...) asparagine). Cysteines 172 and 287 form a disulfide. Residues 177–197 form a helical membrane-spanning segment; the sequence is GVIGFSFISTFFWTLAISMYI. Topologically, residues 198–253 are cytoplasmic; it reads YQQFLSSSTINSNNNNNNINNINNNNNNNINNINNSKNNNSINNFNNSNKSNKIIK. The helical transmembrane segment at 254–274 threads the bilayer; that stretch reads MLFYFVCWVIPFVLGSILVSG. Residues 275–295 lie on the Extracellular side of the membrane; the sequence is SRLIELNSDLPWCSIDSNIQL. Residues 296–316 form a helical membrane-spanning segment; that stretch reads ISFYFPLIICLLATTFFTILI. The Cytoplasmic segment spans residues 317 to 342; it reads KYKFSNDKLACSSSSLINLQSKIIQR. A helical transmembrane segment spans residues 343–363; that stretch reads LILFLIVILVCWVPSLISFFI. Topologically, residues 364–372 are extracellular; it reads SFFSKNCKQ. The helical transmembrane segment at 373–393 threads the bilayer; that stretch reads FLWLEIISSTIQSCQGILNFL. Over 394-470 the chain is Cytoplasmic; the sequence is SYLSIFKKLK…DFDNNQIQEK (77 aa).

Belongs to the G-protein coupled receptor 5 family.

It is found in the membrane. In terms of biological role, receptor for cAMP. This Dictyostelium discoideum (Social amoeba) protein is Cyclic AMP receptor-like protein D (crlD).